Here is a 529-residue protein sequence, read N- to C-terminus: Probable bifunctional tRNA threonylcarbamoyladenosine biosynthesis protein (529 aa).

The tract at residues 1 to 324 (MIVLGLEGTA…FRIDEVDAPW (324 aa)) is kae1. Residues histidine 107, histidine 111, and tyrosine 128 each coordinate Fe cation. L-threonylcarbamoyladenylate is bound by residues 128-132 (YVSGG), aspartate 160, glycine 173, glutamate 177, and asparagine 257. Aspartate 285 is a Fe cation binding site. Residues 329–529 (SRKDYGKAGA…SAIRRRHRYV (201 aa)) form the Protein kinase domain. ATP-binding positions include 335–342 (KAGAESRI) and lysine 355. Aspartate 447 (proton acceptor; for kinase activity) is an active-site residue.

It in the N-terminal section; belongs to the KAE1 / TsaD family. In the C-terminal section; belongs to the protein kinase superfamily. Tyr protein kinase family. BUD32 subfamily. Component of the KEOPS complex that consists of Kae1, Bud32, Cgi121 and Pcc1; the whole complex dimerizes. Fe(2+) serves as cofactor.

It is found in the cytoplasm. The catalysed reaction is L-seryl-[protein] + ATP = O-phospho-L-seryl-[protein] + ADP + H(+). It carries out the reaction L-threonyl-[protein] + ATP = O-phospho-L-threonyl-[protein] + ADP + H(+). The enzyme catalyses L-threonylcarbamoyladenylate + adenosine(37) in tRNA = N(6)-L-threonylcarbamoyladenosine(37) in tRNA + AMP + H(+). In terms of biological role, required for the formation of a threonylcarbamoyl group on adenosine at position 37 (t(6)A37) in tRNAs that read codons beginning with adenine. Is a component of the KEOPS complex that is probably involved in the transfer of the threonylcarbamoyl moiety of threonylcarbamoyl-AMP (TC-AMP) to the N6 group of A37. The Kae1 domain likely plays a direct catalytic role in this reaction. The Bud32 domain probably displays kinase activity that regulates Kae1 function. The chain is Probable bifunctional tRNA threonylcarbamoyladenosine biosynthesis protein from Thermoplasma acidophilum (strain ATCC 25905 / DSM 1728 / JCM 9062 / NBRC 15155 / AMRC-C165).